The sequence spans 279 residues: Zinc finger AN1 and C2H2 domain-containing stress-associated protein 11 (279 aa).

AN1-type zinc fingers lie at residues 7-55 and 95-145; these read PDLG…REDV and ATKK…KLPF. Residues Cys-13, Cys-18, Cys-28, Cys-31, Cys-36, His-39, His-45, Cys-47, Cys-101, Cys-106, Cys-118, Cys-121, Cys-126, His-129, His-135, and Cys-137 each coordinate Zn(2+). The interval 152–178 is disordered; that stretch reads STTRKEAKTTRPNKAHPSTSSSSSSSR. Over residues 169-178 the composition is skewed to low complexity; sequence STSSSSSSSR. 2 C2H2-type zinc fingers span residues 213 to 236 and 250 to 273; these read EVCP…EKTH and DVCP…ERDH.

Its function is as follows. May be involved in environmental stress response. This is Zinc finger AN1 and C2H2 domain-containing stress-associated protein 11 (SAP11) from Arabidopsis thaliana (Mouse-ear cress).